The following is a 473-amino-acid chain: Proton-coupled folate transporter (473 aa).

Pro residues predominate over residues 1 to 20; the sequence is MAAPSDPPTAATPPAPPPPA. The segment at 1–21 is disordered; sequence MAAPSDPPTAATPPAPPPPAR. At 1 to 29 the chain is on the cytoplasmic side; that stretch reads MAAPSDPPTAATPPAPPPPARRCLLAPSV. The helical transmembrane segment at 30–48 threads the bilayer; that stretch reads EPLLFLATLALGLQVPLAT. The Extracellular portion of the chain corresponds to 49-90; sequence QYLWDRLGAERGYVGPNASSPHGCGNGSGAVDPLREEVEALV. N-linked (GlcNAc...) asparagine glycans are attached at residues Asn-65 and Asn-74. A disulfide bridge links Cys-72 with Cys-306. A helical transmembrane segment spans residues 91–116; that stretch reads AHWNLCINLGGFFVGLFSVTLFGPWS. Asn-98 contacts pemetrexed. The Cytoplasmic portion of the chain corresponds to 117-120; the sequence is DSVG. The chain crosses the membrane as a helical span at residues 121–143; the sequence is RRPVLVLPAVGMAVQAAVYLLVM. Residues 144–148 are Extracellular-facing; that stretch reads YLRLH. Residues 149–162 form a helical membrane-spanning segment; that stretch reads VAYLLLGRIISGLL. Over 163–185 the chain is Cytoplasmic; that stretch reads GDYNLILAGCFASVADSSNQRTR. Positions 164 and 193 each coordinate H(+). A helical transmembrane segment spans residues 186–211; sequence TFRVAILEACLGVAGMVASVGGGQWR. Residue Glu-193 participates in pemetrexed binding. At 212–216 the chain is on the extracellular side; that stretch reads KAEGY. The chain crosses the membrane as a helical span at residues 217–235; the sequence is INPFWLVLAASLAAALYAA. Residues 236–274 are Cytoplasmic-facing; the sequence is LCLQETVKQRRAAKLLTLQHYKAVYKLYTAPEDLSSRRK. A helical membrane pass occupies residues 275–297; sequence LALYSLAFFLLVTVHFGTKDLYV. Residue His-289 coordinates H(+). At 298–310 the chain is on the extracellular side; that stretch reads LYELGSPLCWASD. A helical transmembrane segment spans residues 311–333; the sequence is LIGYGSAASYLAYLSSLGGLRLL. Position 323 (Tyr-323) interacts with pemetrexed. The Cytoplasmic segment spans residues 334 to 339; sequence QLCLED. Residues 340–359 traverse the membrane as a helical segment; it reads TWVAEIGLISNIAGLVVISL. The Extracellular portion of the chain corresponds to 360 to 363; that stretch reads ATTT. A helical transmembrane segment spans residues 364–384; it reads PLMFTGYGIMFLSMAATPVIR. Topologically, residues 385-396 are cytoplasmic; that stretch reads AKLSKLVGETEQ. Residues 397–422 traverse the membrane as a helical segment; that stretch reads GALFASVACVEGLCSLVATGVFNSLY. The pemetrexed site is built by Glu-407 and Ser-411. Residues 423-430 are Extracellular-facing; sequence PSTLHFMR. The chain crosses the membrane as a helical span at residues 431 to 449; that stretch reads GFPFLFGAILLLIPAAIMG. Topologically, residues 450 to 473 are cytoplasmic; the sequence is WIEIQDSNLQYSHFSDASSSPADG.

Belongs to the major facilitator superfamily. SLC46A family. In terms of assembly, monomer. Widely expressed, including brain, aorta, liver, kidney, spleen, small intestine, pancreas, ovary and testis.

The protein resides in the cell membrane. It localises to the apical cell membrane. The protein localises to the basolateral cell membrane. Its subcellular location is the endosome membrane. It is found in the cytoplasm. The catalysed reaction is folate(in) + H(+)(in) = folate(out) + H(+)(out). It carries out the reaction (6S)-5-methyl-5,6,7,8-tetrahydrofolate(in) + H(+)(in) = (6S)-5-methyl-5,6,7,8-tetrahydrofolate(out) + H(+)(out). The enzyme catalyses methotrexate(in) + H(+)(in) = methotrexate(out) + H(+)(out). It catalyses the reaction pemetrexed(in) + H(+)(in) = pemetrexed(out) + H(+)(out). Functionally, proton-coupled folate symporter that mediates folate absorption using an H(+) gradient as a driving force. Involved in the intestinal absorption of folates at the brush-border membrane of the proximal jejunum, and the transport from blood to cerebrospinal fluid across the choroid plexus. Functions at acidic pH via alternate outward- and inward-open conformation states. Protonation of residues in the outward open state primes the protein for transport. Binding of folate promotes breaking of salt bridge network and subsequent closure of the extracellular gate, leading to the inward-open state and release of protons and folate. Also able to transport antifolate drugs, such as methotrexate and pemetrexed. Also acts as a lower-affinity, pH-independent heme carrier protein and constitutes the main importer of heme in the intestine. Imports heme in the retina and retinal pigment epithelium, in neurons of the hippocampus, in hepatocytes and in the renal epithelial cells. This Gallus gallus (Chicken) protein is Proton-coupled folate transporter.